The chain runs to 83 residues: Mu-theraphotoxin-Hhn2j 2 (83 aa).

Residues 1–21 (MKASMFLALAGLVLLFVVGYA) form the signal peptide. Positions 22–48 (SESEEKEFPIELLSKIFAVDVFKGEDR) are excised as a propeptide. 3 disulfide bridges follow: C50–C65, C57–C70, and C64–C77. L81 is modified (leucine amide).

This sequence belongs to the neurotoxin 10 (Hwtx-1) family. 15 (Hntx-3) subfamily. In terms of assembly, monomer. As to expression, expressed by the venom gland.

It is found in the secreted. Functionally, lethal neurotoxin. Selectively blocks tetrodotoxin-sensitive voltage-gated sodium channels (Nav). Does not affect tetrodotoxin-resistant voltage-gated sodium channels or calcium channels. The polypeptide is Mu-theraphotoxin-Hhn2j 2 (Cyriopagopus hainanus (Chinese bird spider)).